Consider the following 525-residue polypeptide: uncharacterized protein (525 aa).

Positions Cys21–Cys48 form a DNA-binding region, zn(2)-C6 fungal-type.

It localises to the cytoplasm. Its subcellular location is the nucleus. This is an uncharacterized protein from Schizosaccharomyces pombe (strain 972 / ATCC 24843) (Fission yeast).